The primary structure comprises 235 residues: Ribosomal RNA small subunit methyltransferase G (235 aa).

S-adenosyl-L-methionine-binding positions include G74, L79, 124 to 125 (AE), and R142. The segment at 211 to 235 (RRRAAKPGRNKSGRTARSRGRTGRR) is disordered. The segment covering 213-235 (RAAKPGRNKSGRTARSRGRTGRR) has biased composition (basic residues).

Belongs to the methyltransferase superfamily. RNA methyltransferase RsmG family.

The protein resides in the cytoplasm. Functionally, specifically methylates the N7 position of guanine in position 518 of 16S rRNA. The sequence is that of Ribosomal RNA small subunit methyltransferase G from Mycolicibacterium smegmatis (strain ATCC 700084 / mc(2)155) (Mycobacterium smegmatis).